Consider the following 142-residue polypeptide: Large ribosomal subunit protein uL11 (142 aa).

The protein belongs to the universal ribosomal protein uL11 family. Part of the ribosomal stalk of the 50S ribosomal subunit. Interacts with L10 and the large rRNA to form the base of the stalk. L10 forms an elongated spine to which L12 dimers bind in a sequential fashion forming a multimeric L10(L12)X complex. One or more lysine residues are methylated.

Forms part of the ribosomal stalk which helps the ribosome interact with GTP-bound translation factors. This Idiomarina loihiensis (strain ATCC BAA-735 / DSM 15497 / L2-TR) protein is Large ribosomal subunit protein uL11.